Here is a 932-residue protein sequence, read N- to C-terminus: 2-oxoglutarate dehydrogenase E1 component (932 aa).

The protein belongs to the alpha-ketoglutarate dehydrogenase family. Homodimer. Part of the 2-oxoglutarate dehydrogenase (OGDH) complex composed of E1 (2-oxoglutarate dehydrogenase), E2 (dihydrolipoamide succinyltransferase) and E3 (dihydrolipoamide dehydrogenase); the complex contains multiple copies of the three enzymatic components (E1, E2 and E3). The cofactor is thiamine diphosphate.

The enzyme catalyses N(6)-[(R)-lipoyl]-L-lysyl-[protein] + 2-oxoglutarate + H(+) = N(6)-[(R)-S(8)-succinyldihydrolipoyl]-L-lysyl-[protein] + CO2. E1 component of the 2-oxoglutarate dehydrogenase (OGDH) complex which catalyzes the decarboxylation of 2-oxoglutarate, the first step in the conversion of 2-oxoglutarate to succinyl-CoA and CO(2). In Staphylococcus aureus (strain JH9), this protein is 2-oxoglutarate dehydrogenase E1 component.